A 129-amino-acid chain; its full sequence is UPF0212 protein MM_2357 (129 aa).

The protein belongs to the UPF0212 family.

The chain is UPF0212 protein MM_2357 from Methanosarcina mazei (strain ATCC BAA-159 / DSM 3647 / Goe1 / Go1 / JCM 11833 / OCM 88) (Methanosarcina frisia).